A 99-amino-acid polypeptide reads, in one-letter code: Aspartyl/glutamyl-tRNA(Asn/Gln) amidotransferase subunit C (99 aa).

This sequence belongs to the GatC family. In terms of assembly, heterotrimer of A, B and C subunits.

It carries out the reaction L-glutamyl-tRNA(Gln) + L-glutamine + ATP + H2O = L-glutaminyl-tRNA(Gln) + L-glutamate + ADP + phosphate + H(+). The enzyme catalyses L-aspartyl-tRNA(Asn) + L-glutamine + ATP + H2O = L-asparaginyl-tRNA(Asn) + L-glutamate + ADP + phosphate + 2 H(+). Allows the formation of correctly charged Asn-tRNA(Asn) or Gln-tRNA(Gln) through the transamidation of misacylated Asp-tRNA(Asn) or Glu-tRNA(Gln) in organisms which lack either or both of asparaginyl-tRNA or glutaminyl-tRNA synthetases. The reaction takes place in the presence of glutamine and ATP through an activated phospho-Asp-tRNA(Asn) or phospho-Glu-tRNA(Gln). The chain is Aspartyl/glutamyl-tRNA(Asn/Gln) amidotransferase subunit C from Cupriavidus necator (strain ATCC 17699 / DSM 428 / KCTC 22496 / NCIMB 10442 / H16 / Stanier 337) (Ralstonia eutropha).